A 244-amino-acid polypeptide reads, in one-letter code: Krueppel-like factor 9 (244 aa).

Disordered regions lie at residues 26 to 51 (EHGG…GDPG) and 79 to 143 (PSVC…EKRH). Over residues 32–51 (EAERLRLPEREVTKEHGDPG) the composition is skewed to basic and acidic residues. Position 122 is a phosphoserine (S122). The segment covering 134–143 (KGKHASEKRH) has biased composition (basic residues). C2H2-type zinc fingers lie at residues 143-167 (HKCP…YRVH), 173-197 (FPCT…YRTH), and 203-225 (FRCP…ARRH).

Belongs to the Sp1 C2H2-type zinc-finger protein family. In terms of assembly, interacts with ZZEF1.

The protein resides in the nucleus. In terms of biological role, transcription factor that binds to GC box promoter elements. Selectively activates mRNA synthesis from genes containing tandem repeats of GC boxes but represses genes with a single GC box. Acts as an epidermal circadian transcription factor regulating keratinocyte proliferation. The sequence is that of Krueppel-like factor 9 (Klf9) from Mus musculus (Mouse).